The primary structure comprises 475 residues: Aspartyl/glutamyl-tRNA(Asn/Gln) amidotransferase subunit B (475 aa).

The protein belongs to the GatB/GatE family. GatB subfamily. As to quaternary structure, heterotrimer of A, B and C subunits.

It catalyses the reaction L-glutamyl-tRNA(Gln) + L-glutamine + ATP + H2O = L-glutaminyl-tRNA(Gln) + L-glutamate + ADP + phosphate + H(+). The catalysed reaction is L-aspartyl-tRNA(Asn) + L-glutamine + ATP + H2O = L-asparaginyl-tRNA(Asn) + L-glutamate + ADP + phosphate + 2 H(+). Functionally, allows the formation of correctly charged Asn-tRNA(Asn) or Gln-tRNA(Gln) through the transamidation of misacylated Asp-tRNA(Asn) or Glu-tRNA(Gln) in organisms which lack either or both of asparaginyl-tRNA or glutaminyl-tRNA synthetases. The reaction takes place in the presence of glutamine and ATP through an activated phospho-Asp-tRNA(Asn) or phospho-Glu-tRNA(Gln). The polypeptide is Aspartyl/glutamyl-tRNA(Asn/Gln) amidotransferase subunit B (Staphylococcus carnosus (strain TM300)).